We begin with the raw amino-acid sequence, 352 residues long: tRNA N6-adenosine threonylcarbamoyltransferase (352 aa).

Fe cation contacts are provided by H115 and H119. Residues 137 to 141 (LVSGG), D170, G183, and N281 contribute to the substrate site. D309 serves as a coordination point for Fe cation.

It belongs to the KAE1 / TsaD family. Requires Fe(2+) as cofactor.

Its subcellular location is the cytoplasm. The enzyme catalyses L-threonylcarbamoyladenylate + adenosine(37) in tRNA = N(6)-L-threonylcarbamoyladenosine(37) in tRNA + AMP + H(+). In terms of biological role, required for the formation of a threonylcarbamoyl group on adenosine at position 37 (t(6)A37) in tRNAs that read codons beginning with adenine. Is involved in the transfer of the threonylcarbamoyl moiety of threonylcarbamoyl-AMP (TC-AMP) to the N6 group of A37, together with TsaE and TsaB. TsaD likely plays a direct catalytic role in this reaction. This is tRNA N6-adenosine threonylcarbamoyltransferase from Methylocapsa acidiphila.